A 282-amino-acid chain; its full sequence is Elongation factor Ts (282 aa).

Residues 81–84 (TDFV) are involved in Mg(2+) ion dislocation from EF-Tu. Positions 218 to 270 (KPAQPAQVAEVAAAPPAEPVADQPAAEPPAESVAPEPVVAESADAEPAPAAEG) are enriched in low complexity. Positions 218–282 (KPAQPAQVAE…SKKGSTKKKK (65 aa)) are disordered. The segment covering 273–282 (SKKGSTKKKK) has biased composition (basic residues).

Belongs to the EF-Ts family.

The protein resides in the cytoplasm. Associates with the EF-Tu.GDP complex and induces the exchange of GDP to GTP. It remains bound to the aminoacyl-tRNA.EF-Tu.GTP complex up to the GTP hydrolysis stage on the ribosome. This Synechococcus sp. (strain JA-3-3Ab) (Cyanobacteria bacterium Yellowstone A-Prime) protein is Elongation factor Ts.